Here is a 398-residue protein sequence, read N- to C-terminus: Polyferredoxin protein VhuB (398 aa).

11 4Fe-4S ferredoxin-type domains span residues 2–31 (AGIK…IAPF), 25–53 (AIEI…VENN), 54–83 (GKLI…VDDR), 82–111 (DRFP…IPGK), 123–152 (QEPI…IEDE), 152–181 (ELAV…VAGK), 191–219 (KSFT…YNRE), 220–249 (DLIV…LEVE), 259–291 (EGLV…MINQ), 300–331 (TKTD…MGKI), and 339–368 (NRIE…LTGD). C11, C14, C17, C21, C34, C37, C40, C44, C63, C66, C69, C73, C91, C94, C97, C101, C132, C135, C138, C142, C161, C164, C167, C171, C199, C202, C205, C209, C229, C232, C235, C239, C268, C271, C274, C278, C311, C314, C317, C321, C348, C351, C354, C358, C377, C380, C383, and C387 together coordinate [4Fe-4S] cluster.

[4Fe-4S] cluster serves as cofactor.

The protein is Polyferredoxin protein VhuB (vhuB) of Methanococcus voltae.